A 247-amino-acid polypeptide reads, in one-letter code: Mast cell protease 2 (247 aa).

A signal peptide spans 1-18 (MQALLFLMALLLPSGAGA). The propeptide at 19–20 (EE) is activation peptide. The Peptidase S1 domain occupies 21 to 244 (IIGGVESIPH…YVPWINAVIN (224 aa)). A disulfide bridge links cysteine 50 with cysteine 66. Active-site charge relay system residues include histidine 65 and aspartate 109. Cystine bridges form between cysteine 143–cysteine 208 and cysteine 174–cysteine 187. The active-site Charge relay system is the serine 202.

Belongs to the peptidase S1 family. Granzyme subfamily.

Functionally, this enzyme, isolated from small intestine, specifically inactivates the apo forms of a certain group of intracellular pyridoxal phosphate-requiring enzymes. It has chymotrypsin-like specificity towards small substrates. The protein is Mast cell protease 2 (Mcpt2) of Rattus norvegicus (Rat).